The chain runs to 136 residues: Small ribosomal subunit protein uS8 (136 aa).

It belongs to the universal ribosomal protein uS8 family. As to quaternary structure, part of the 30S ribosomal subunit. Contacts proteins S5 and S12.

Functionally, one of the primary rRNA binding proteins, it binds directly to 16S rRNA central domain where it helps coordinate assembly of the platform of the 30S subunit. This chain is Small ribosomal subunit protein uS8, found in Sulfurihydrogenibium sp. (strain YO3AOP1).